The sequence spans 772 residues: Potassium transporter 24 (772 aa).

The Cytoplasmic portion of the chain corresponds to 1–23 (MDVEGGGAAARRKGGWWWWREEA). A helical transmembrane segment spans residues 24 to 44 (VLAYQSLGVVYGEVAAAPLYV). Topologically, residues 45-66 (YRSAFAGGDIEHSAGNEEIYGA) are extracellular. Residues 67–87 (LSLVFWTLTLVPLAKYVLLVL) form a helical membrane-spanning segment. The Cytoplasmic portion of the chain corresponds to 88 to 150 (RADDAGEGGT…ALERHRVLQR (63 aa)). Residues 151-171 (LLLLLALLGTCMVIGDGVLTP) form a helical membrane-spanning segment. Residues 172 to 192 (AVSVFSAVSGLELSMDKDQHK) lie on the Extracellular side of the membrane. A helical transmembrane segment spans residues 193 to 213 (YILLPITCVILVCLFALQHYG). Topologically, residues 214–216 (THR) are cytoplasmic. Residues 217 to 237 (VGFLFAPIVCLWLLCISIIGV) form a helical membrane-spanning segment. Over 238–265 (YNIIHWNPHVYQALSPYYMYKFLRKTQT) the chain is Extracellular. Residues 266–286 (GGWMSLGGILLCVTGSEAMYA) form a helical membrane-spanning segment. Over 287–298 (DLGHFTQNSIKM) the chain is Cytoplasmic. A helical membrane pass occupies residues 299-319 (AFTLLVYPALVLAYMGQAAYI). At 320 to 344 (SRHHNFEDGSHIGFYVSVPEKIRWP) the chain is on the extracellular side. Residues 345 to 365 (VLGIAILASVVGSQAIITGTF) traverse the membrane as a helical segment. Topologically, residues 366–392 (SIIKQCSSLNCFPRVKIVHTSSTVHGQ) are cytoplasmic. Residues 393-413 (IYIPEINWILMILCLSVTIGF) form a helical membrane-spanning segment. At 414–423 (RDTKHLTNAQ) the chain is on the extracellular side. The helical transmembrane segment at 424–444 (GLAVITVMLVTTCLMSLVILL) threads the bilayer. Topologically, residues 445 to 449 (CWNKS) are cytoplasmic. Residues 450 to 470 (IVYALSFLLFFGAIEVIYFAA) traverse the membrane as a helical segment. Residues 471-477 (SLVKFHE) lie on the Extracellular side of the membrane. The helical transmembrane segment at 478-498 (GAWVPVTLSFIFMMVMCVWHY) threads the bilayer. Topologically, residues 499 to 772 (GTKKKYEFDV…TVEVGMICLV (274 aa)) are cytoplasmic. The tract at residues 656 to 684 (EEGEFDGSDSTGSSAHKEINPNTTAPKPK) is disordered.

This sequence belongs to the HAK/KUP transporter (TC 2.A.72.3) family.

Its subcellular location is the membrane. Its function is as follows. High-affinity potassium transporter. This chain is Potassium transporter 24 (HAK24), found in Oryza sativa subsp. japonica (Rice).